Reading from the N-terminus, the 370-residue chain is Histidinol-phosphate aminotransferase 1 (370 aa).

Lys229 bears the N6-(pyridoxal phosphate)lysine mark.

The protein belongs to the class-II pyridoxal-phosphate-dependent aminotransferase family. Histidinol-phosphate aminotransferase subfamily. As to quaternary structure, homodimer. It depends on pyridoxal 5'-phosphate as a cofactor.

It catalyses the reaction L-histidinol phosphate + 2-oxoglutarate = 3-(imidazol-4-yl)-2-oxopropyl phosphate + L-glutamate. It functions in the pathway amino-acid biosynthesis; L-histidine biosynthesis; L-histidine from 5-phospho-alpha-D-ribose 1-diphosphate: step 7/9. In Nitrosococcus oceani (strain ATCC 19707 / BCRC 17464 / JCM 30415 / NCIMB 11848 / C-107), this protein is Histidinol-phosphate aminotransferase 1.